The following is a 75-amino-acid chain: Large ribosomal subunit protein bL31 (75 aa).

Belongs to the bacterial ribosomal protein bL31 family. Type A subfamily. In terms of assembly, part of the 50S ribosomal subunit.

Functionally, binds the 23S rRNA. The chain is Large ribosomal subunit protein bL31 from Nitrobacter winogradskyi (strain ATCC 25391 / DSM 10237 / CIP 104748 / NCIMB 11846 / Nb-255).